The sequence spans 367 residues: tRNA/tmRNA (uracil-C(5))-methyltransferase (367 aa).

5 residues coordinate S-adenosyl-L-methionine: Gln190, Tyr218, Asn223, Glu239, and Asp299. Cys324 serves as the catalytic Nucleophile. The active-site Proton acceptor is the Glu358.

The protein belongs to the class I-like SAM-binding methyltransferase superfamily. RNA M5U methyltransferase family. TrmA subfamily.

It carries out the reaction uridine(54) in tRNA + S-adenosyl-L-methionine = 5-methyluridine(54) in tRNA + S-adenosyl-L-homocysteine + H(+). The catalysed reaction is uridine(341) in tmRNA + S-adenosyl-L-methionine = 5-methyluridine(341) in tmRNA + S-adenosyl-L-homocysteine + H(+). Dual-specificity methyltransferase that catalyzes the formation of 5-methyluridine at position 54 (m5U54) in all tRNAs, and that of position 341 (m5U341) in tmRNA (transfer-mRNA). This chain is tRNA/tmRNA (uracil-C(5))-methyltransferase, found in Pectobacterium carotovorum subsp. carotovorum (strain PC1).